Consider the following 1102-residue polypeptide: DNA-directed RNA polymerase subunit beta (1102 aa).

The disordered stretch occupies residues isoleucine 1076–valine 1102.

This sequence belongs to the RNA polymerase beta chain family. In cyanobacteria the RNAP catalytic core is composed of 2 alpha, 1 beta, 1 beta', 1 gamma and 1 omega subunit. When a sigma factor is associated with the core the holoenzyme is formed, which can initiate transcription.

The catalysed reaction is RNA(n) + a ribonucleoside 5'-triphosphate = RNA(n+1) + diphosphate. Its function is as follows. DNA-dependent RNA polymerase catalyzes the transcription of DNA into RNA using the four ribonucleoside triphosphates as substrates. This chain is DNA-directed RNA polymerase subunit beta, found in Synechocystis sp. (strain ATCC 27184 / PCC 6803 / Kazusa).